We begin with the raw amino-acid sequence, 528 residues long: O-methylsterigmatocystin oxidoreductase (528 aa).

A heme-binding site is contributed by C440.

This sequence belongs to the cytochrome P450 family. It depends on heme as a cofactor.

It catalyses the reaction 8-O-methylsterigmatocystin + 2 reduced [NADPH--hemoprotein reductase] + 2 O2 = aflatoxin B1 + methanol + 2 oxidized [NADPH--hemoprotein reductase] + CO2 + H2O + 2 H(+). The catalysed reaction is 8-O-methyldihydrosterigmatocystin + 2 reduced [NADPH--hemoprotein reductase] + 2 O2 = aflatoxin B2 + methanol + 2 oxidized [NADPH--hemoprotein reductase] + CO2 + H2O + 2 H(+). The protein operates within mycotoxin biosynthesis; aflatoxin biosynthesis. Converts O-methylsterigmatocystin (OMST) to aflatoxin B1 and converts dihydro-O-methylsterigmatocystin (DHOMST) to aflatoxin B2 in the aflatoxin biosynthesis pathway. The polypeptide is O-methylsterigmatocystin oxidoreductase (ordA) (Aspergillus flavus).